The primary structure comprises 379 residues: DNA replication and repair protein RecF (379 aa).

30-37 lines the ATP pocket; sequence GDNAQGKS.

It belongs to the RecF family.

Its subcellular location is the cytoplasm. In terms of biological role, the RecF protein is involved in DNA metabolism; it is required for DNA replication and normal SOS inducibility. RecF binds preferentially to single-stranded, linear DNA. It also seems to bind ATP. The polypeptide is DNA replication and repair protein RecF (Thermosynechococcus vestitus (strain NIES-2133 / IAM M-273 / BP-1)).